The sequence spans 1008 residues: MSQSFPRNDTSSSSEDETDNYRSHIQIPSLDLANYRKQQKSTSKTNLAKAGKKLKNNKSVRFPDSYSPRDTIISNASTTNNSSSDSELEQDMVTGENSNLPNFNFSANQVHSPEYANEDDANDDSGEEEDTFEPPADFYASEGSDEDMEADNEGDNVEDKEEVVNEKEEIADDLHSKSSKTSRESKSFNAGTKNSRRSLNSLQRNETDVTDQLKRTTSTTSSSKRSNSDKRTGFKDILRKFALVDQQYPEAPSNRESEDLGEPQPSRSDTFLGNVLSMAGESGGLVPGATHFSREKTIDEEEEVGFEDEDSDLIEMKKLDFAQLSNEAQNLISTHVPDLANKLPEGTSSDQQLDYSDTSASNLIKNDEETGNEATKKDDEFYTPNPDYFIRGDINNENDADDYLMLDEHMDDIAPPKRVQAGVLSSLLKLYQNPQEQQSSSSLTSKSTYGGNTLADDSNYSYSDPKAASTLDFTKLKNDFKNGPKRMANKIPGRKHGAQKQDTQDESAQKYYDEDGNEIAAPNLPSFHNAKPKAPKKIAAAGKVPSKVHKKLKEHKRQQDQQLRITVHIADILHRQRFIMRMCKALMMFGAPTHRLEEYMTLTSRVLEIDGQFVYFPGCMIVSFGDASTRTSEVHLVRCAQGLNLSKLSDTHRIYKGVIHDILPVDEASTQLEELLKKKNRYSPWLCVFLYGLGSSMVCPFAFNGGWYDVPIAFGVGLCVGYLQFFVSSKSNLYSSVFEVTASIVVTFIARAIGSIHDGEYFCFSAIAQGSLALILPGYIILTGSLELQSRNIVAGSVRMFYAIIYSLFLGFGITLGASLYGWVDSNAISTTKCKNSIKQDEFKILFVPLFSACLGLINQARWRQLPIMIVIACAGYVGTFFAGKHKQFSEVTEFTACIGAFIVGILGNLYSRIGKGMAVAAMLPAIFVQVPSGIASQSTLLAGVESADKLTSSNSTTTDTSTASDSAGSLAFGATMVKVSIGISVGLFASALFVYPFGKKKTGLFSL.

Disordered stretches follow at residues 1-273, 342-384, and 477-506; these read MSQS…TFLG, KLPE…FYTP, and KNDFKNGPKRMANKIPGRKHGAQKQDTQDE. Residues 70–85 are compositionally biased toward low complexity; that stretch reads DTIISNASTTNNSSSD. Polar residues predominate over residues 95–111; sequence GENSNLPNFNFSANQVH. Acidic residues-rich tracts occupy residues 116 to 132 and 143 to 161; these read ANEDDANDDSGEEEDTF and GSDEDMEADNEGDNVEDKE. The segment covering 162–186 has biased composition (basic and acidic residues); sequence EVVNEKEEIADDLHSKSSKTSRESK. The span at 188–204 shows a compositional bias: polar residues; the sequence is FNAGTKNSRRSLNSLQR. Positions 205–214 are enriched in basic and acidic residues; sequence NETDVTDQLK. Residues 215 to 225 show a composition bias toward low complexity; it reads RTTSTTSSSKR. Residues 226-239 show a composition bias toward basic and acidic residues; sequence SNSDKRTGFKDILR. Polar residues predominate over residues 346 to 364; sequence GTSSDQQLDYSDTSASNLI. Residues 483 to 498 are compositionally biased toward basic residues; the sequence is GPKRMANKIPGRKHGA. A run of 10 helical transmembrane segments spans residues 683–703, 707–727, 736–756, 762–782, 800–820, 838–858, 866–886, 892–912, 917–937, and 978–998; these read SPWLCVFLYGLGSSMVCPFAF, WYDVPIAFGVGLCVGYLQFFV, SVFEVTASIVVTFIARAIGSI, FCFSAIAQGSLALILPGYIIL, MFYAIIYSLFLGFGITLGASL, IKQDEFKILFVPLFSACLGLI, LPIMIVIACAGYVGTFFAGKH, VTEFTACIGAFIVGILGNLYS, GMAVAAMLPAIFVQVPSGIAS, and VKVSIGISVGLFASALFVYPF.

The protein belongs to the ThrE exporter (TC 2.A.79) family.

The protein resides in the membrane. The sequence is that of Pheromone-regulated membrane protein 10 from Debaryomyces hansenii (strain ATCC 36239 / CBS 767 / BCRC 21394 / JCM 1990 / NBRC 0083 / IGC 2968) (Yeast).